The sequence spans 443 residues: Xaa-Pro dipeptidase (443 aa).

Residues Asp246, Asp257, His339, Glu384, and Glu423 each contribute to the Mn(2+) site.

Belongs to the peptidase M24B family. Bacterial-type prolidase subfamily. Mn(2+) is required as a cofactor.

It catalyses the reaction Xaa-L-Pro dipeptide + H2O = an L-alpha-amino acid + L-proline. Splits dipeptides with a prolyl residue in the C-terminal position. In Pectobacterium carotovorum subsp. carotovorum (strain PC1), this protein is Xaa-Pro dipeptidase.